We begin with the raw amino-acid sequence, 1058 residues long: Ubiquitin-like modifier-activating enzyme 1 (1058 aa).

Residues 1 to 46 are disordered; that stretch reads MSSSPLSKKRRVSGPDPKPGSNCSPAQSALSEVSSVPTNGMAKNGS. At S2 the chain carries N-acetylserine. Residues S4, S13, S21, S24, and S46 each carry the phosphoserine modification. The span at 21-38 shows a compositional bias: polar residues; it reads SNCSPAQSALSEVSSVPT. Y55 carries the post-translational modification Phosphotyrosine. 2 consecutive repeat copies span residues 63–199 and 459–611. A 2 approximate repeats region spans residues 63-611; sequence GHEAMKMLQT…GTKGNVQVVI (549 aa). ATP is bound by residues A478, D504, R515, K528, and 576-577; that span reads DN. K528 is modified (N6-succinyllysine). The active-site Glycyl thioester intermediate is the C632. Residue K671 is modified to N6-acetyllysine. T800 carries the phosphothreonine modification. S810, S816, S820, and S835 each carry phosphoserine. K980 bears the N6-acetyllysine mark.

This sequence belongs to the ubiquitin-activating E1 family. As to quaternary structure, monomer. Interacts with GAN (via BTB domain). ISGylated. As to expression, ubiquitously expressed. In testis, expressed in A spermatogonia and spermatids but at very low levels in pachytene spermatocytes.

It localises to the cytoplasm. Its subcellular location is the mitochondrion. The protein resides in the nucleus. It carries out the reaction ATP + ubiquitin + [E1 ubiquitin-activating enzyme]-L-cysteine = AMP + diphosphate + S-ubiquitinyl-[E1 ubiquitin-activating enzyme]-L-cysteine.. It functions in the pathway protein modification; protein ubiquitination. Its function is as follows. Catalyzes the first step in ubiquitin conjugation to mark cellular proteins for degradation through the ubiquitin-proteasome system. Activates ubiquitin by first adenylating its C-terminal glycine residue with ATP, and thereafter linking this residue to the side chain of a cysteine residue in E1, yielding a ubiquitin-E1 thioester and free AMP. Essential for the formation of radiation-induced foci, timely DNA repair and for response to replication stress. Promotes the recruitment of TP53BP1 and BRCA1 at DNA damage sites. The protein is Ubiquitin-like modifier-activating enzyme 1 (Uba1) of Mus musculus (Mouse).